The following is a 24-amino-acid chain: Brevinin-1CSa (24 aa).

Cysteine 18 and cysteine 24 are disulfide-bonded.

In terms of tissue distribution, expressed by the skin glands.

The protein resides in the secreted. It localises to the target cell membrane. In terms of biological role, antibacterial peptide. Has activity against the Gram-positive bacterium S.aureus (MIC=2 uM) and the Gram-negative bacterium E.coli (MIC=32 uM). Has a strong hemolytic activity (LC(50)=5 uM). The chain is Brevinin-1CSa from Rana cascadae (Cascades frog).